The sequence spans 43 residues: Photosystem I reaction center subunit IX (43 aa).

Residues Tyr7 to Ile27 form a helical membrane-spanning segment.

It belongs to the PsaJ family.

The protein localises to the plastid. The protein resides in the chloroplast thylakoid membrane. In terms of biological role, may help in the organization of the PsaE and PsaF subunits. The sequence is that of Photosystem I reaction center subunit IX from Gnetum parvifolium (Small-leaved jointfir).